The following is a 412-amino-acid chain: Dihydrolipoyllysine-residue acetyltransferase component of pyruvate dehydrogenase complex (412 aa).

Residues 2–78 (PIKILMPVLS…PVNSLIAVLS (77 aa)) form the Lipoyl-binding domain. Lysine 43 carries the N6-lipoyllysine modification. Residues 132-169 (FASPLAKRLAKMGNIRLESVKGSGPHGRIVKQDILSYT) form the Peripheral subunit-binding (PSBD) domain. Residue histidine 385 is part of the active site.

Belongs to the 2-oxoacid dehydrogenase family. Forms a 24-polypeptide structural core with octahedral symmetry. The cofactor is (R)-lipoate.

It catalyses the reaction N(6)-[(R)-dihydrolipoyl]-L-lysyl-[protein] + acetyl-CoA = N(6)-[(R)-S(8)-acetyldihydrolipoyl]-L-lysyl-[protein] + CoA. The pyruvate dehydrogenase complex catalyzes the overall conversion of pyruvate to acetyl-CoA and CO(2). It contains multiple copies of three enzymatic components: pyruvate dehydrogenase (E1), dihydrolipoamide acetyltransferase (E2) and lipoamide dehydrogenase (E3). The chain is Dihydrolipoyllysine-residue acetyltransferase component of pyruvate dehydrogenase complex (pdhC) from Rickettsia felis (strain ATCC VR-1525 / URRWXCal2) (Rickettsia azadi).